A 450-amino-acid polypeptide reads, in one-letter code: MKTALVILAAGKGTRMNSDLPKVLHPLAGAPLLIHAMQSGASLGPSRTVIVAGHGAELVQKAALSHDASAIIVQQTEQLGTGHAAKQAQDALKGFDGTVVVLFGDTPFVSPDTLSAICDAQRSADVVVLGFEAADPARYGRLVMDGAQLDRIVEYKDATEAERAITLCNSGVVACNGTRLFELLEAVDNDNAAGEFYLPDIVGVARARGLTAAVVTCDESETLGINSRTELSAAEAAFQERARTNAFENGVTLPAPGTVHFAFDTVVGRDTLIEPNVVFGPGVTIESGATIRAFSHLEGCHVARGSVVGPYARLRPGAELSENVRVGNFVEVKNARIGTGTKINHLSYIGDATLGEYTNVGAGTITCNYDGVLKHHTEIGNHVFIGSNTMLVAPVQIGDHAMTGSGSVITSDVEPEALALSRAPQIEKPGMATKIINLLRAKKAKQQRGS.

The interval 1–228 (MKTALVILAA…ESETLGINSR (228 aa)) is pyrophosphorylase. UDP-N-acetyl-alpha-D-glucosamine-binding positions include 8–11 (LAAG), Lys22, Gln75, and 80–81 (GT). Asp105 serves as a coordination point for Mg(2+). UDP-N-acetyl-alpha-D-glucosamine is bound by residues Gly140, Glu154, Asn169, and Asn226. Residue Asn226 coordinates Mg(2+). Positions 229–249 (TELSAAEAAFQERARTNAFEN) are linker. The N-acetyltransferase stretch occupies residues 250 to 450 (GVTLPAPGTV…AKKAKQQRGS (201 aa)). Arg315 and Lys333 together coordinate UDP-N-acetyl-alpha-D-glucosamine. His345 acts as the Proton acceptor in catalysis. Tyr348 and Asn359 together coordinate UDP-N-acetyl-alpha-D-glucosamine. Residues Ala362, 368 to 369 (NY), Ser387, Ser405, and Arg422 contribute to the acetyl-CoA site.

In the N-terminal section; belongs to the N-acetylglucosamine-1-phosphate uridyltransferase family. The protein in the C-terminal section; belongs to the transferase hexapeptide repeat family. In terms of assembly, homotrimer. Mg(2+) serves as cofactor.

The protein localises to the cytoplasm. It carries out the reaction alpha-D-glucosamine 1-phosphate + acetyl-CoA = N-acetyl-alpha-D-glucosamine 1-phosphate + CoA + H(+). The catalysed reaction is N-acetyl-alpha-D-glucosamine 1-phosphate + UTP + H(+) = UDP-N-acetyl-alpha-D-glucosamine + diphosphate. Its pathway is nucleotide-sugar biosynthesis; UDP-N-acetyl-alpha-D-glucosamine biosynthesis; N-acetyl-alpha-D-glucosamine 1-phosphate from alpha-D-glucosamine 6-phosphate (route II): step 2/2. The protein operates within nucleotide-sugar biosynthesis; UDP-N-acetyl-alpha-D-glucosamine biosynthesis; UDP-N-acetyl-alpha-D-glucosamine from N-acetyl-alpha-D-glucosamine 1-phosphate: step 1/1. It participates in bacterial outer membrane biogenesis; LPS lipid A biosynthesis. Its function is as follows. Catalyzes the last two sequential reactions in the de novo biosynthetic pathway for UDP-N-acetylglucosamine (UDP-GlcNAc). The C-terminal domain catalyzes the transfer of acetyl group from acetyl coenzyme A to glucosamine-1-phosphate (GlcN-1-P) to produce N-acetylglucosamine-1-phosphate (GlcNAc-1-P), which is converted into UDP-GlcNAc by the transfer of uridine 5-monophosphate (from uridine 5-triphosphate), a reaction catalyzed by the N-terminal domain. This is Bifunctional protein GlmU from Roseobacter denitrificans (strain ATCC 33942 / OCh 114) (Erythrobacter sp. (strain OCh 114)).